The sequence spans 245 residues: Tetraspanin-6 (245 aa).

The Cytoplasmic segment spans residues 1–19; that stretch reads MASPSRRLQTKPVITCFKS. A helical transmembrane segment spans residues 20–40; that stretch reads VLLIYTFIFWITGVILLAVGI. The Extracellular portion of the chain corresponds to 41–59; sequence WGKVSLENYFSLLNEKATN. A helical transmembrane segment spans residues 60-80; it reads VPFVLIATGTVIILLGTFGCF. Residues 81–93 lie on the Cytoplasmic side of the membrane; that stretch reads ATCRASAWMLKLY. The chain crosses the membrane as a helical span at residues 94–114; it reads AMFLTLIFLVELVAAIVGFVF. The Extracellular segment spans residues 115 to 208; it reads RHEIKNSFKN…IKVMTIIESE (94 aa). N134 carries an N-linked (GlcNAc...) asparagine glycan. Residues 209–229 form a helical membrane-spanning segment; that stretch reads MGVVAGISFGVACFQLIGIFL. Topologically, residues 230-245 are cytoplasmic; sequence AYCLSRAITNNQYEIV.

This sequence belongs to the tetraspanin (TM4SF) family.

It is found in the membrane. This chain is Tetraspanin-6 (TSPAN6), found in Pongo abelii (Sumatran orangutan).